Reading from the N-terminus, the 144-residue chain is Superoxide dismutase [Mn], mitochondrial (144 aa).

Mn(2+) is bound by residues histidine 10, histidine 58, and aspartate 143.

It belongs to the iron/manganese superoxide dismutase family. Homotetramer. It depends on Mn(2+) as a cofactor.

It localises to the mitochondrion matrix. It carries out the reaction 2 superoxide + 2 H(+) = H2O2 + O2. Functionally, destroys superoxide anion radicals which are normally produced within the cells and which are toxic to biological systems. This is Superoxide dismutase [Mn], mitochondrial from Branchiostoma floridae (Florida lancelet).